A 20-amino-acid polypeptide reads, in one-letter code: Apidaecin 2+ (20 aa).

The segment covering 1–13 (GKPNKPRPAPIKP) has biased composition (pro residues). The interval 1–20 (GKPNKPRPAPIKPRPPHPRL) is disordered.

Its subcellular location is the secreted. Its function is as follows. Antimicrobial peptide active against many Gram-negative enterobacterial and plant-associated bacterial species. Not active against other bacterial species like H.pylori, P.mirabilis, B.pertussis or N.gonorrhoeae. This chain is Apidaecin 2+, found in Pimpla disparis (Parasitic wasp).